We begin with the raw amino-acid sequence, 501 residues long: Cytochrome P450 90A4 (501 aa).

A helical transmembrane segment spans residues 2-22 (AAAALLLLAAAAAAVVVAMAL). A heme-binding site is contributed by cysteine 446.

Belongs to the cytochrome P450 family. The cofactor is heme. In terms of tissue distribution, highly expressed in shoot apex and inflorenscence. Expressed in roots, stems, leaf blades and leaf sheaths.

It is found in the cell membrane. The protein operates within plant hormone biosynthesis; brassinosteroid biosynthesis. Functionally, catalyzes the C23-alpha-hydroxylation step in brassinosteroid biosynthesis. Converts 6-deoxocathasterone to 6-deoxoteasterone in the late C6-oxidation pathway and cathasterone to teasterone (TE) in the early C6-oxidation pathway of brassinolide (BL) biosynthesis. This chain is Cytochrome P450 90A4, found in Oryza sativa subsp. japonica (Rice).